We begin with the raw amino-acid sequence, 188 residues long: Ribosome-recycling factor (188 aa).

Belongs to the RRF family.

Its subcellular location is the cytoplasm. In terms of biological role, responsible for the release of ribosomes from messenger RNA at the termination of protein biosynthesis. May increase the efficiency of translation by recycling ribosomes from one round of translation to another. This chain is Ribosome-recycling factor, found in Blochmanniella floridana.